The primary structure comprises 588 residues: Adenine deaminase (588 aa).

The protein belongs to the metallo-dependent hydrolases superfamily. Adenine deaminase family. As to quaternary structure, homodimer. Mn(2+) serves as cofactor.

The enzyme catalyses adenine + H2O + H(+) = hypoxanthine + NH4(+). The protein is Adenine deaminase of Escherichia fergusonii (strain ATCC 35469 / DSM 13698 / CCUG 18766 / IAM 14443 / JCM 21226 / LMG 7866 / NBRC 102419 / NCTC 12128 / CDC 0568-73).